The sequence spans 978 residues: Copper-transporting ATPase HMA4 (978 aa).

The span at 1 to 11 shows a compositional bias: basic and acidic residues; sequence MEQNGENHLKD. Residues 1–35 form a disordered region; sequence MEQNGENHLKDPLLQADGGGSGASPAGASPRKERK. 3 consecutive HMA domains span residues 37–103, 111–177, and 186–252; these read RKVM…FEVD, AVCR…FGAD, and NKVH…QPPK. Residues Cys-48, Cys-51, Cys-122, and Cys-125 each coordinate Cu(+). 8 helical membrane passes run 280–300, 315–335, 352–372, 385–405, 545–565, 584–604, 907–927, and 935–955; these read FLWS…LPMI, MTIG…IIGW, MDVL…YIVL, FFET…LEVV, FFVP…FVAG, LALQ…LGLA, VWAL…LFPF, and WLAG…SLLL.

Belongs to the cation transport ATPase (P-type) (TC 3.A.3) family. Type IB subfamily. Highly expressed in roots. Expressed in vascular tissues of the stele, mainly in pericycle cells.

Its subcellular location is the vacuole membrane. The catalysed reaction is Cu(+)(in) + ATP + H2O = Cu(+)(out) + ADP + phosphate + H(+). Its function is as follows. Copper (Cu) transporter that mediates Cu transport in root vacuoles. Involved in Cu detoxification by sequestrating Cu into root vacuoles and limiting translocation of Cu from the roots to the shoots, and accumulation in grains. The polypeptide is Copper-transporting ATPase HMA4 (Oryza sativa subsp. japonica (Rice)).